Reading from the N-terminus, the 307-residue chain is uncharacterized protein (307 aa).

This is an uncharacterized protein from Acidianus hospitalis (AFV-1).